Reading from the N-terminus, the 349-residue chain is ATPase GET3 (349 aa).

26–33 (KGGVGKTT) is a binding site for ATP. The active site involves D57. ATP-binding residues include E242 and N269. Zn(2+) contacts are provided by C281 and C284.

This sequence belongs to the arsA ATPase family. In terms of assembly, homodimer. Component of the Golgi to ER traffic (GET) complex, which is composed of GET1, GET2 and GET3. Within the complex, GET1 and GET2 form a heterotetramer which is stabilized by phosphatidylinositol binding and which binds to the GET3 homodimer. Interacts with the chloride channel protein GEF1.

Its subcellular location is the cytoplasm. The protein localises to the endoplasmic reticulum. It is found in the golgi apparatus. Its function is as follows. ATPase required for the post-translational delivery of tail-anchored (TA) proteins to the endoplasmic reticulum. Recognizes and selectively binds the transmembrane domain of TA proteins in the cytosol. This complex then targets to the endoplasmic reticulum by membrane-bound receptors GET1 and GET2, where the tail-anchored protein is released for insertion. This process is regulated by ATP binding and hydrolysis. ATP binding drives the homodimer towards the closed dimer state, facilitating recognition of newly synthesized TA membrane proteins. ATP hydrolysis is required for insertion. Subsequently, the homodimer reverts towards the open dimer state, lowering its affinity for the GET1-GET2 receptor, and returning it to the cytosol to initiate a new round of targeting. Cooperates with the HDEL receptor ERD2 to mediate the ATP-dependent retrieval of resident ER proteins that contain a C-terminal H-D-E-L retention signal from the Golgi to the ER. Involved in low-level resistance to the oxyanions arsenite and arsenate, and in heat tolerance. The chain is ATPase GET3 from Lodderomyces elongisporus (strain ATCC 11503 / CBS 2605 / JCM 1781 / NBRC 1676 / NRRL YB-4239) (Yeast).